The primary structure comprises 379 residues: Armadillo repeat-containing X-linked protein 3 (379 aa).

Over 1–6 (MGYARK) the chain is Mitochondrial intermembrane. Mitochondrion outer membrane (MOM)-targeting sequence stretches follow at residues 1–6 (MGYARK) and 26–37 (RLTRGRKQNKEK). A helical; Signal-anchor transmembrane segment spans residues 7–29 (VGWVTAGLVIGAGACYCIYRLTR). Residues 30–379 (GRKQNKEKMA…AEHMFPKSQE (350 aa)) are Cytoplasmic-facing. 3 positions are modified to phosphoserine: Ser-61, Ser-67, and Ser-72. The interval 89 to 98 (RARARARARA) is nuclear localization signal. The segment covering 95-106 (RARATRARRAVQ) has biased composition (basic residues). The disordered stretch occupies residues 95-116 (RARATRARRAVQKRASPNSDDT). Ser-110 carries the post-translational modification Phosphoserine. 3 ARM repeats span residues 111–151 (PNSD…NNAA), 153–192 (AFNR…NLSV), and 233–272 (VTNE…NLAE).

It belongs to the eutherian X-chromosome-specific Armcx family. In terms of assembly, interacts (via ARM domain) with MIRO1, MIRO2 and TRAK2. The interaction with Miro is calcium-dependent. Interacts with SOX10.

It is found in the mitochondrion outer membrane. Its subcellular location is the cytoplasm. It localises to the nucleus. Its function is as follows. Regulates mitochondrial aggregation and transport in axons in living neurons. May link mitochondria to the TRAK2-kinesin motor complex via its interaction with Miro and TRAK2. Mitochondrial distribution and dynamics is regulated through ARMCX3 protein degradation, which is promoted by PCK and negatively regulated by WNT1. Enhances the SOX10-mediated transactivation of the neuronal acetylcholine receptor subunit alpha-3 and beta-4 subunit gene promoters. This Homo sapiens (Human) protein is Armadillo repeat-containing X-linked protein 3 (ARMCX3).